Consider the following 319-residue polypeptide: Ornithine carbamoyltransferase (319 aa).

Residues 55 to 58, Gln82, Arg106, and 133 to 136 each bind carbamoyl phosphate; these read STRT and HPCQ. L-ornithine-binding positions include Asn171, Asp234, and 238 to 239; that span reads SM. Residues 274–275 and Arg302 each bind carbamoyl phosphate; that span reads CL.

Belongs to the aspartate/ornithine carbamoyltransferase superfamily. OTCase family.

It is found in the cytoplasm. It catalyses the reaction carbamoyl phosphate + L-ornithine = L-citrulline + phosphate + H(+). It participates in amino-acid biosynthesis; L-arginine biosynthesis; L-arginine from L-ornithine and carbamoyl phosphate: step 1/3. Its function is as follows. Reversibly catalyzes the transfer of the carbamoyl group from carbamoyl phosphate (CP) to the N(epsilon) atom of ornithine (ORN) to produce L-citrulline. In Corynebacterium diphtheriae (strain ATCC 700971 / NCTC 13129 / Biotype gravis), this protein is Ornithine carbamoyltransferase.